A 346-amino-acid polypeptide reads, in one-letter code: uncharacterized protein (346 aa).

Position 65 (His65) interacts with Zn(2+). The active site involves Asp67. Zn(2+) is bound at residue Asp89. The Proton acceptor role is filled by Glu115. Residues Glu116, Glu145, and His319 each coordinate Zn(2+).

Belongs to the peptidase M20A family. Zn(2+) serves as cofactor. Requires Co(2+) as cofactor.

This is an uncharacterized protein from Methanocaldococcus jannaschii (strain ATCC 43067 / DSM 2661 / JAL-1 / JCM 10045 / NBRC 100440) (Methanococcus jannaschii).